Reading from the N-terminus, the 278-residue chain is Release factor glutamine methyltransferase (278 aa).

S-adenosyl-L-methionine-binding positions include 116–120, D139, W168, and N182; that span reads GTGTG. Residue 182 to 185 coordinates substrate; that stretch reads NPPY.

It belongs to the protein N5-glutamine methyltransferase family. PrmC subfamily.

The catalysed reaction is L-glutaminyl-[peptide chain release factor] + S-adenosyl-L-methionine = N(5)-methyl-L-glutaminyl-[peptide chain release factor] + S-adenosyl-L-homocysteine + H(+). In terms of biological role, methylates the class 1 translation termination release factors RF1/PrfA and RF2/PrfB on the glutamine residue of the universally conserved GGQ motif. This Cereibacter sphaeroides (strain ATCC 17023 / DSM 158 / JCM 6121 / CCUG 31486 / LMG 2827 / NBRC 12203 / NCIMB 8253 / ATH 2.4.1.) (Rhodobacter sphaeroides) protein is Release factor glutamine methyltransferase.